A 269-amino-acid chain; its full sequence is Small ribosomal subunit protein uS2 (269 aa).

A disordered region spans residues 228–269 (ARAERQAAAAKDAAGDTGKSEADAEAVKAEAAAEEKAETTEA). Low complexity predominate over residues 233 to 244 (QAAAAKDAAGDT). Residues 245 to 269 (GKSEADAEAVKAEAAAEEKAETTEA) show a composition bias toward basic and acidic residues.

It belongs to the universal ribosomal protein uS2 family.

The chain is Small ribosomal subunit protein uS2 from Corynebacterium urealyticum (strain ATCC 43042 / DSM 7109).